Consider the following 122-residue polypeptide: Ig heavy chain V region M511 (122 aa).

An Ig-like domain is found at 1–114; that stretch reads EVKLVESGGG…SYWYFDVWGA (114 aa).

This is Ig heavy chain V region M511 from Mus musculus (Mouse).